We begin with the raw amino-acid sequence, 335 residues long: Phenylalanine--tRNA ligase alpha subunit (335 aa).

E262 provides a ligand contact to Mg(2+).

Belongs to the class-II aminoacyl-tRNA synthetase family. Phe-tRNA synthetase alpha subunit type 1 subfamily. Tetramer of two alpha and two beta subunits. It depends on Mg(2+) as a cofactor.

It is found in the cytoplasm. The catalysed reaction is tRNA(Phe) + L-phenylalanine + ATP = L-phenylalanyl-tRNA(Phe) + AMP + diphosphate + H(+). This Prochlorococcus marinus (strain NATL2A) protein is Phenylalanine--tRNA ligase alpha subunit.